We begin with the raw amino-acid sequence, 354 residues long: Peripherin-2 (354 aa).

Over 1–24 (MALLKVKFNQKKRVKLAQGLWLMN) the chain is Cytoplasmic. A helical membrane pass occupies residues 25 to 43 (WFSVFAGIIVFSMGLFLKI). Residues 44–61 (ELRKRSEVMDNSESHFVP) lie on the Lumenal side of the membrane. Residues 62–80 (NSLILMGILSCAFNGFAGK) form a helical membrane-spanning segment. Residues 81 to 99 (ICYDSLDPAKFAKWKPLLK) lie on the Cytoplasmic side of the membrane. Residues 100-123 (PYLALCFFFNILLFFVALICFLMR) form a helical membrane-spanning segment. Residues 124 to 264 (GSLESTLAQG…LHYYSSMMSS (141 aa)) lie on the Lumenal side of the membrane. Residue asparagine 229 is glycosylated (N-linked (GlcNAc...) asparagine). The chain crosses the membrane as a helical span at residues 265–290 (MGAVVLLVWLFEMSVMVGLRLLHTSL). Topologically, residues 291–354 (ESIANPEDPE…GKTPAITTVS (64 aa)) are cytoplasmic. The disordered stretch occupies residues 335 to 354 (GAEGAEGEEAGKTPAITTVS).

Belongs to the PRPH2/ROM1 family. In terms of assembly, homodimer; disulfide-linked.

The protein localises to the membrane. Its function is as follows. May be involved in the morphogenesis of retina outer segment disks and the development and maintenance of the retina ultrastructure. In Gallus gallus (Chicken), this protein is Peripherin-2 (PRPH2).